Consider the following 151-residue polypeptide: Ribosome maturation factor RimP (151 aa).

This sequence belongs to the RimP family.

It is found in the cytoplasm. In terms of biological role, required for maturation of 30S ribosomal subunits. This chain is Ribosome maturation factor RimP, found in Haemophilus influenzae (strain 86-028NP).